Here is a 162-residue protein sequence, read N- to C-terminus: Probable chemoreceptor glutamine deamidase CheD 2 (162 aa).

The protein belongs to the CheD family.

The enzyme catalyses L-glutaminyl-[protein] + H2O = L-glutamyl-[protein] + NH4(+). Its function is as follows. Probably deamidates glutamine residues to glutamate on methyl-accepting chemotaxis receptors (MCPs), playing an important role in chemotaxis. The polypeptide is Probable chemoreceptor glutamine deamidase CheD 2 (Geobacter metallireducens (strain ATCC 53774 / DSM 7210 / GS-15)).